The primary structure comprises 549 residues: Glucose-6-phosphate isomerase (549 aa).

Residue Glu-354 is the Proton donor of the active site. Catalysis depends on residues His-385 and Lys-513.

Belongs to the GPI family.

The protein resides in the cytoplasm. It catalyses the reaction alpha-D-glucose 6-phosphate = beta-D-fructose 6-phosphate. Its pathway is carbohydrate biosynthesis; gluconeogenesis. It functions in the pathway carbohydrate degradation; glycolysis; D-glyceraldehyde 3-phosphate and glycerone phosphate from D-glucose: step 2/4. Its function is as follows. Catalyzes the reversible isomerization of glucose-6-phosphate to fructose-6-phosphate. This chain is Glucose-6-phosphate isomerase, found in Nitrosococcus oceani (strain ATCC 19707 / BCRC 17464 / JCM 30415 / NCIMB 11848 / C-107).